The primary structure comprises 78 residues: Signal peptidase complex subunit 1 (78 aa).

At 1-18 the chain is on the cytoplasmic side; it reads MNYLEGTIDFAGQLRCQK. A helical transmembrane segment spans residues 19-38; sequence YMNYGLCTSAVISYIYGYLV. At 39 to 42 the chain is on the lumenal side; sequence QDSY. The chain crosses the membrane as a helical span at residues 43–63; that stretch reads CVIKLFLILASLVALVCLPAW. Residues 64–78 lie on the Cytoplasmic side of the membrane; sequence SMYNKNPLKFQKKKE.

The protein belongs to the SPCS1 family. As to quaternary structure, component of the signal peptidase complex (SPC) composed of a catalytic subunit sec11 and three accessory subunits spc1, spc2 and spc3. The complex induces a local thinning of the ER membrane which is used to measure the length of the signal peptide (SP) h-region of protein substrates. This ensures the selectivity of the complex towards h-regions shorter than 18-20 amino acids. SPC associates with the translocon complex.

Its subcellular location is the endoplasmic reticulum membrane. Functionally, component of the signal peptidase complex (SPC) which catalyzes the cleavage of N-terminal signal sequences from nascent proteins as they are translocated into the lumen of the endoplasmic reticulum. Dispensable for SPC enzymatic activity. The chain is Signal peptidase complex subunit 1 from Schizosaccharomyces pombe (strain 972 / ATCC 24843) (Fission yeast).